Here is a 197-residue protein sequence, read N- to C-terminus: MSSKSSSTIRDKWKLKKWYVITAPKVFGEALLGSTPAYDINKALSRKIEVTLYDLTGDYNLVYIHLYFKILGNISGDKLSTIFYGHELSRDYIRSLVRRKSSKINAVVDVTTKDGYMLRVKGLVLTTYRAHISQKTAIRKVISDITRKKAEESDFDQFVQDVIFGKLSNDIFQEAKKIYPLRKVEIEKTKLLKAPKV.

It belongs to the eukaryotic ribosomal protein eS1 family.

In Sulfolobus acidocaldarius (strain ATCC 33909 / DSM 639 / JCM 8929 / NBRC 15157 / NCIMB 11770), this protein is Small ribosomal subunit protein eS1.